A 142-amino-acid chain; its full sequence is Large ribosomal subunit protein uL11 (142 aa).

The protein belongs to the universal ribosomal protein uL11 family. Part of the ribosomal stalk of the 50S ribosomal subunit. Interacts with L10 and the large rRNA to form the base of the stalk. L10 forms an elongated spine to which L12 dimers bind in a sequential fashion forming a multimeric L10(L12)X complex. One or more lysine residues are methylated.

Forms part of the ribosomal stalk which helps the ribosome interact with GTP-bound translation factors. This is Large ribosomal subunit protein uL11 from Aliivibrio fischeri (strain MJ11) (Vibrio fischeri).